Consider the following 425-residue polypeptide: 3-phosphoshikimate 1-carboxyvinyltransferase (425 aa).

3-phosphoshikimate is bound by residues lysine 21, serine 22, and arginine 26. Phosphoenolpyruvate is bound at residue lysine 21. Residues glycine 91 and arginine 119 each contribute to the phosphoenolpyruvate site. Residues serine 164, glutamine 166, aspartate 311, and lysine 338 each contribute to the 3-phosphoshikimate site. Glutamine 166 serves as a coordination point for phosphoenolpyruvate. Aspartate 311 functions as the Proton acceptor in the catalytic mechanism. Arginine 342 and arginine 383 together coordinate phosphoenolpyruvate.

Belongs to the EPSP synthase family. As to quaternary structure, monomer.

The protein localises to the cytoplasm. The enzyme catalyses 3-phosphoshikimate + phosphoenolpyruvate = 5-O-(1-carboxyvinyl)-3-phosphoshikimate + phosphate. The protein operates within metabolic intermediate biosynthesis; chorismate biosynthesis; chorismate from D-erythrose 4-phosphate and phosphoenolpyruvate: step 6/7. Catalyzes the transfer of the enolpyruvyl moiety of phosphoenolpyruvate (PEP) to the 5-hydroxyl of shikimate-3-phosphate (S3P) to produce enolpyruvyl shikimate-3-phosphate and inorganic phosphate. The polypeptide is 3-phosphoshikimate 1-carboxyvinyltransferase (Campylobacter fetus subsp. fetus (strain 82-40)).